The sequence spans 40 residues: Acyl-CoA-binding protein 2 (40 aa).

The span at A1 to T15 shows a compositional bias: basic and acidic residues. Positions A1–K25 are disordered. The region spanning L2–V40 is the ACB domain.

This sequence belongs to the ACBP family.

It localises to the cytoplasm. Binds medium- and long-chain acyl-CoA esters with very high affinity and may function as an intracellular carrier of acyl-CoA esters. In Digitalis lanata (Grecian foxglove), this protein is Acyl-CoA-binding protein 2.